A 203-amino-acid chain; its full sequence is Small ribosomal subunit protein uS4 (203 aa).

Residues 22–45 are disordered; it reads TGKELARRPYKPGQHGPNSRGKVS. The S4 RNA-binding domain maps to 93–156; it reads QRLDNVVYRL…QNISTIKEAV (64 aa).

The protein belongs to the universal ribosomal protein uS4 family. As to quaternary structure, part of the 30S ribosomal subunit. Contacts protein S5. The interaction surface between S4 and S5 is involved in control of translational fidelity.

Functionally, one of the primary rRNA binding proteins, it binds directly to 16S rRNA where it nucleates assembly of the body of the 30S subunit. With S5 and S12 plays an important role in translational accuracy. The polypeptide is Small ribosomal subunit protein uS4 (Enterococcus faecalis (strain ATCC 700802 / V583)).